The chain runs to 685 residues: tRNA 5-methylaminomethyl-2-thiouridine biosynthesis bifunctional protein MnmC (685 aa).

The segment at 1-272 is tRNA (mnm(5)s(2)U34)-methyltransferase; that stretch reads MTAEPNKPCQ…MAAILSSATQ (272 aa). The tract at residues 278 to 685 is FAD-dependent cmnm(5)s(2)U34 oxidoreductase; that stretch reads IGGGLASAHL…LRKLLKGKAL (408 aa).

It in the N-terminal section; belongs to the methyltransferase superfamily. tRNA (mnm(5)s(2)U34)-methyltransferase family. The protein in the C-terminal section; belongs to the DAO family. It depends on FAD as a cofactor.

The protein resides in the cytoplasm. The catalysed reaction is 5-aminomethyl-2-thiouridine(34) in tRNA + S-adenosyl-L-methionine = 5-methylaminomethyl-2-thiouridine(34) in tRNA + S-adenosyl-L-homocysteine + H(+). Functionally, catalyzes the last two steps in the biosynthesis of 5-methylaminomethyl-2-thiouridine (mnm(5)s(2)U) at the wobble position (U34) in tRNA. Catalyzes the FAD-dependent demodification of cmnm(5)s(2)U34 to nm(5)s(2)U34, followed by the transfer of a methyl group from S-adenosyl-L-methionine to nm(5)s(2)U34, to form mnm(5)s(2)U34. This chain is tRNA 5-methylaminomethyl-2-thiouridine biosynthesis bifunctional protein MnmC, found in Shewanella baltica (strain OS185).